Consider the following 416-residue polypeptide: Tyrosine--tRNA ligase (416 aa).

Residue Tyr37 coordinates L-tyrosine. Residues Pro42–Asn51 carry the 'HIGH' region motif. Positions 176 and 180 each coordinate L-tyrosine. Residues Lys236–Ser240 carry the 'KMSKS' region motif. Residue Lys239 coordinates ATP. The region spanning Leu350–Val416 is the S4 RNA-binding domain.

Belongs to the class-I aminoacyl-tRNA synthetase family. TyrS type 1 subfamily. Homodimer.

It is found in the cytoplasm. The enzyme catalyses tRNA(Tyr) + L-tyrosine + ATP = L-tyrosyl-tRNA(Tyr) + AMP + diphosphate + H(+). Its function is as follows. Catalyzes the attachment of tyrosine to tRNA(Tyr) in a two-step reaction: tyrosine is first activated by ATP to form Tyr-AMP and then transferred to the acceptor end of tRNA(Tyr). The polypeptide is Tyrosine--tRNA ligase (Gluconobacter oxydans (strain 621H) (Gluconobacter suboxydans)).